Here is a 1148-residue protein sequence, read N- to C-terminus: Putative ATP-dependent RNA helicase rha-2 (1148 aa).

A compositionally biased stretch (basic and acidic residues) spans 1 to 10; sequence MGKRKTKEDN. Disordered regions lie at residues 1-51 and 101-163; these read MGKR…FAKE and STKL…DAGN. A compositionally biased stretch (acidic residues) spans 138–160; that stretch reads PTDDESSSEEEEEEEEGDNDIED. The 167-residue stretch at 246 to 412 folds into the Helicase ATP-binding domain; the sequence is VEAINENLVT…KLFPLLTPKV (167 aa). 259–266 is an ATP binding site; it reads GETGSGKT. A DEAH box motif is present at residues 355-358; the sequence is DEAH. A Helicase C-terminal domain is found at 463–703; the sequence is EVKQLITKLK…QLVLHLKSMN (241 aa).

The protein belongs to the DEAD box helicase family. DEAH subfamily.

It catalyses the reaction ATP + H2O = ADP + phosphate + H(+). Its function is as follows. Probable ATP-binding RNA helicase. The protein is Putative ATP-dependent RNA helicase rha-2 (rha-2) of Caenorhabditis elegans.